The following is a 624-amino-acid chain: Pentatricopeptide repeat-containing protein At4g31070, mitochondrial (624 aa).

The transit peptide at 1–15 (MRWVKLGRRVIMSRA) directs the protein to the mitochondrion. PPR repeat units follow at residues 56-91 (FTAI…GADC), 92-122 (DTVV…MLHR), 123-157 (DTVS…GFIP), 158-192 (KSEL…DERM), 195-225 (SVLL…MEVK), 226-260 (NEVS…NLRP), 261-296 (NRVT…GCHA), 297-327 (DERL…SKVR), 328-362 (DVVM…GIEA), 363-397 (NSVT…GFMS), 398-428 (HILL…LTEK), 429-463 (DLVS…GHEV), 464-498 (DDMA…HMPV), and 499-529 (TLEH…MPMK). Positions 534–610 (IWSSLLSACE…CYGFSKIEPE (77 aa)) are type E motif.

It belongs to the PPR family. PCMP-E subfamily.

The protein resides in the mitochondrion. This Arabidopsis thaliana (Mouse-ear cress) protein is Pentatricopeptide repeat-containing protein At4g31070, mitochondrial (PCMP-E7).